Here is a 335-residue protein sequence, read N- to C-terminus: Zinc finger protein CO3 (335 aa).

Zn(2+) contacts are provided by Cys-15, Cys-18, Cys-38, and His-43. A B box-type; atypical zinc finger spans residues 15-57; sequence CDSCRSAPCAFYCLADSAALCATCDADVHSVNPLARRHRRVPM. Positions 141-179 are disordered; that stretch reads AGEKEDASSSKDCSSSHGKSSEGSHEFAVPGEPVPERQG. Residues 268–310 enclose the CCT domain; the sequence is REARVHRYREKRKTRRFEKTIRYASRKAYAETRPRIKGRFAKR.

The protein belongs to the CONSTANS family.

Its subcellular location is the nucleus. Probable transcription factor involved in the regulation of flowering time under short day (SD) conditions. Functions as a repressor of flowering under SD conditions, independently of HD1, EHD1, MADS50 and MADS51. Controls flowering time under SD conditions by negatively regulating the expression of HD3A and FTL. The polypeptide is Zinc finger protein CO3 (Oryza sativa subsp. japonica (Rice)).